Consider the following 306-residue polypeptide: Erythromycin 3''-O-methyltransferase (306 aa).

Residues Leu157 and His162 each coordinate S-adenosyl-L-methionine.

The protein belongs to the methyltransferase superfamily.

It carries out the reaction erythromycin C + S-adenosyl-L-methionine = erythromycin A + S-adenosyl-L-homocysteine + H(+). It catalyses the reaction erythromycin D + S-adenosyl-L-methionine = erythromycin B + S-adenosyl-L-homocysteine + H(+). It participates in antibiotic biosynthesis; erythromycin biosynthesis. In terms of biological role, S-adenosyl-L-methionine-dependent O-methyltransferase that catalyzes the last step in the erythromycin biosynthesis pathway. Methylates the position 3 of the mycarosyl moiety of erythromycin C, forming the most active form of the antibiotic, erythromycin A. Can also methylate the precursor erythromycin D, forming erythromycin B. This is Erythromycin 3''-O-methyltransferase (eryG) from Saccharopolyspora erythraea (strain ATCC 11635 / DSM 40517 / JCM 4748 / NBRC 13426 / NCIMB 8594 / NRRL 2338).